The chain runs to 578 residues: Glutamate--tRNA ligase (578 aa).

The short motif at 97–107 is the 'HIGH' region element; it reads PNPDFVIHLGN.

The protein belongs to the class-I aminoacyl-tRNA synthetase family. Glutamate--tRNA ligase type 2 subfamily.

The protein localises to the cytoplasm. It carries out the reaction tRNA(Glu) + L-glutamate + ATP = L-glutamyl-tRNA(Glu) + AMP + diphosphate. Functionally, catalyzes the attachment of glutamate to tRNA(Glu) in a two-step reaction: glutamate is first activated by ATP to form Glu-AMP and then transferred to the acceptor end of tRNA(Glu). The sequence is that of Glutamate--tRNA ligase from Hyperthermus butylicus (strain DSM 5456 / JCM 9403 / PLM1-5).